Consider the following 706-residue polypeptide: Fatty acid oxidation complex subunit alpha (706 aa).

The interval 1–188 (MEKTFNLTRR…KMGLVNDVVP (188 aa)) is enoyl-CoA hydratase. The segment at 308-706 (RKVKKAVILG…TMAQENAHFF (399 aa)) is 3-hydroxyacyl-CoA dehydrogenase.

It in the N-terminal section; belongs to the enoyl-CoA hydratase/isomerase family. The protein in the central section; belongs to the 3-hydroxyacyl-CoA dehydrogenase family. In terms of assembly, heterotetramer of two alpha chains (FadJ) and two beta chains (FadI).

It is found in the cytoplasm. The enzyme catalyses a (3S)-3-hydroxyacyl-CoA = a (2E)-enoyl-CoA + H2O. It catalyses the reaction a 4-saturated-(3S)-3-hydroxyacyl-CoA = a (3E)-enoyl-CoA + H2O. The catalysed reaction is a (3S)-3-hydroxyacyl-CoA + NAD(+) = a 3-oxoacyl-CoA + NADH + H(+). It carries out the reaction (3S)-3-hydroxybutanoyl-CoA = (3R)-3-hydroxybutanoyl-CoA. It participates in lipid metabolism; fatty acid beta-oxidation. In terms of biological role, catalyzes the formation of a hydroxyacyl-CoA by addition of water on enoyl-CoA. Also exhibits 3-hydroxyacyl-CoA epimerase and 3-hydroxyacyl-CoA dehydrogenase activities. The polypeptide is Fatty acid oxidation complex subunit alpha (Shewanella baltica (strain OS185)).